The sequence spans 25 residues: Granule-bound starch synthase 1, chloroplastic/amyloplastic (25 aa).

Residue Lys16 coordinates ADP-alpha-D-glucose.

This sequence belongs to the glycosyltransferase 1 family. Bacterial/plant glycogen synthase subfamily. As to expression, expressed in endosperm.

Its subcellular location is the plastid. It localises to the chloroplast. The protein resides in the amyloplast. The catalysed reaction is an NDP-alpha-D-glucose + [(1-&gt;4)-alpha-D-glucosyl](n) = [(1-&gt;4)-alpha-D-glucosyl](n+1) + a ribonucleoside 5'-diphosphate + H(+). It participates in glycan biosynthesis; starch biosynthesis. In terms of biological role, required for the synthesis of amylose in endosperm. In Fagopyrum esculentum (Common buckwheat), this protein is Granule-bound starch synthase 1, chloroplastic/amyloplastic.